The primary structure comprises 1053 residues: Serine/threonine-protein phosphatase 6 regulatory ankyrin repeat subunit A (1053 aa).

ANK repeat units follow at residues Glu-40–Ala-69, Lys-73–Ala-102, Asn-106–Val-135, Ala-139–Ala-168, Lys-172–Cys-201, Lys-205–Glu-234, Tyr-238–Gln-267, Lys-271–Met-301, Asp-305–Cys-334, Asn-338–Lys-367, His-371–Thr-400, Phe-404–Lys-433, Phe-437–Asp-466, Arg-470–Ile-500, Gln-504–Met-534, Ala-549–Val-578, Ser-582–Val-611, Leu-616–Ala-645, Asn-652–Ala-681, Trp-685–Leu-714, Arg-718–Ala-747, His-755–Thr-784, Asn-787–Asn-817, Lys-822–Ser-851, Thr-855–Leu-885, Ser-889–Leu-918, and Ala-925–Ala-954. Ser-1007 and Ser-1011 each carry phosphoserine.

In terms of assembly, protein phosphatase 6 (PP6) holoenzyme is proposed to be a heterotrimeric complex formed by the catalytic subunit, a SAPS domain-containing subunit (PP6R) and an ankyrin repeat-domain containing regulatory subunit (ARS). Interacts with PPP6C, PPP6R1 and PPP6R3. Interacts with PPP1C and HNRPK. Post-translationally, ubiquitinated by the ECS(RAB40C) complex leading to its degradation and decreased PP6 activity.

It localises to the nucleus. The protein localises to the nucleoplasm. It is found in the cytoplasm. The protein resides in the cytosol. Its subcellular location is the cell projection. It localises to the lamellipodium. Functionally, regulatory subunit of protein phosphatase 6 (PP6) that may be involved in the recognition of phosphoprotein substrates. Involved in the PP6-mediated dephosphorylation of NFKBIE opposing its degradation in response to TNF-alpha. Selectively inhibits the phosphatase activity of PPP1C. Targets PPP1C to modulate HNRPK phosphorylation. Involved in the PP6-mediated dephosphorylation of MOB1 and induced focal adhesion assembly during cell migration. The polypeptide is Serine/threonine-protein phosphatase 6 regulatory ankyrin repeat subunit A (Homo sapiens (Human)).